The chain runs to 190 residues: Protein GrpE (190 aa).

The segment covering 1–26 (MADKEKDAVIVDETEHVDVDSKESKK) has biased composition (basic and acidic residues). Residues 1 to 31 (MADKEKDAVIVDETEHVDVDSKESKKEKKTK) form a disordered region.

This sequence belongs to the GrpE family. Homodimer.

Its subcellular location is the cytoplasm. In terms of biological role, participates actively in the response to hyperosmotic and heat shock by preventing the aggregation of stress-denatured proteins, in association with DnaK and GrpE. It is the nucleotide exchange factor for DnaK and may function as a thermosensor. Unfolded proteins bind initially to DnaJ; upon interaction with the DnaJ-bound protein, DnaK hydrolyzes its bound ATP, resulting in the formation of a stable complex. GrpE releases ADP from DnaK; ATP binding to DnaK triggers the release of the substrate protein, thus completing the reaction cycle. Several rounds of ATP-dependent interactions between DnaJ, DnaK and GrpE are required for fully efficient folding. This is Protein GrpE from Acholeplasma laidlawii (strain PG-8A).